The following is a 596-amino-acid chain: Nuclear receptor subfamily 2 group C member 2 (596 aa).

Ser-19 is subject to Phosphoserine; by MAPK. At Ser-46 the chain carries Phosphoserine. Phosphoserine; by MAPK is present on residues Ser-55 and Ser-68. The residue at position 98 (Ser-98) is a Phosphoserine. A DNA-binding region (nuclear receptor) is located at residues 114–189 (VEYCVVCGDK…MGMKMESVQS (76 aa)). 2 NR C4-type zinc fingers span residues 117 to 137 (CVVC…CEGC) and 153 to 177 (CRSN…LKKC). Residue Lys-192 forms a Glycyl lysine isopeptide (Lys-Gly) (interchain with G-Cter in SUMO2) linkage. Position 219 is a phosphoserine (Ser-219). The residue at position 231 (Lys-231) is an N6-acetyllysine. Residues 341–583 (GSIHVISRDQ…SIIPYILKME (243 aa)) enclose the NR LBD domain.

This sequence belongs to the nuclear hormone receptor family. NR2 subfamily. In terms of assembly, homodimer; can bind DNA as homodimer. Heterodimer; binds DNA as a heterodimer with NR2C1 required for chromatin remodeling and for binding to promoter regions such as globin DR1 repeats. Interacts with PCAF; the interaction preferentially occurs on the non-phosphorylated form and induces NR2C2-mediated transactivation activity and does not require the ligand-binding domain. Interacts (MAPK-mediated phosphorylated form) with NRIP1; the interaction promotes repression of NR2C2-mediated activity. Interacts with NR2C2AP; the interaction represses selective NR2C2-mediated transcriptional activity. Interacts with NLRP10. Interacts (via ligand-binding region) with transcriptional corepressor JAZF1; the interaction promotes NR2C2-mediated transcriptional repression. Post-translationally, phosphorylation on Ser-19 and Ser-68 is an important regulator of NR2C2-mediated transcriptional activity. Phosphorylation on these residues recruits the corepressor, NRIP1, leading to transcripional repression, whereas the non-phosphorylated form preferentially recruits the coactivator, PCAF.

The protein resides in the nucleus. Orphan nuclear receptor that can act as a repressor or activator of transcription. An important repressor of nuclear receptor signaling pathways such as retinoic acid receptor, retinoid X, vitamin D3 receptor, thyroid hormone receptor and estrogen receptor pathways. May regulate gene expression during the late phase of spermatogenesis. Together with NR2C1, forms the core of the DRED (direct repeat erythroid-definitive) complex that represses embryonic and fetal globin transcription including that of GATA1. Binds to hormone response elements (HREs) consisting of two 5'-AGGTCA-3' half site direct repeat consensus sequences. Plays a fundamental role in early embryonic development and embryonic stem cells. Required for normal spermatogenesis and cerebellum development. Appears to be important for neurodevelopmentally regulated behavior. Activates transcriptional activity of LHCG. Antagonist of PPARA-mediated transactivation. In Homo sapiens (Human), this protein is Nuclear receptor subfamily 2 group C member 2 (NR2C2).